The sequence spans 231 residues: 5'-methylthioadenosine/S-adenosylhomocysteine nucleosidase (231 aa).

Glu12 (proton acceptor) is an active-site residue. Substrate contacts are provided by residues Gly78, Ile153, and 174 to 175; that span reads ME. Catalysis depends on Asp198, which acts as the Proton donor.

The protein belongs to the PNP/UDP phosphorylase family. MtnN subfamily.

It catalyses the reaction S-adenosyl-L-homocysteine + H2O = S-(5-deoxy-D-ribos-5-yl)-L-homocysteine + adenine. The enzyme catalyses S-methyl-5'-thioadenosine + H2O = 5-(methylsulfanyl)-D-ribose + adenine. The catalysed reaction is 5'-deoxyadenosine + H2O = 5-deoxy-D-ribose + adenine. Its pathway is amino-acid biosynthesis; L-methionine biosynthesis via salvage pathway; S-methyl-5-thio-alpha-D-ribose 1-phosphate from S-methyl-5'-thioadenosine (hydrolase route): step 1/2. Its function is as follows. Catalyzes the irreversible cleavage of the glycosidic bond in both 5'-methylthioadenosine (MTA) and S-adenosylhomocysteine (SAH/AdoHcy) to adenine and the corresponding thioribose, 5'-methylthioribose and S-ribosylhomocysteine, respectively. Also cleaves 5'-deoxyadenosine, a toxic by-product of radical S-adenosylmethionine (SAM) enzymes, into 5-deoxyribose and adenine. In Shewanella putrefaciens (strain CN-32 / ATCC BAA-453), this protein is 5'-methylthioadenosine/S-adenosylhomocysteine nucleosidase.